Reading from the N-terminus, the 259-residue chain is Transcription factor bHLH80 (259 aa).

The interval 1–25 is disordered; sequence MQSTHISGGSSGGGGGGGGEVSRSG. Gly residues predominate over residues 9–20; sequence GSSGGGGGGGGE. The region spanning 187 to 237 is the bHLH domain; the sequence is CATHPRSIAERVRRTRISDRIRRLQELVPNMDKQTNTADMLEEAVEYVKAL.

In terms of assembly, homodimer. Expressed constitutively in roots, leaves, stems, and flowers.

The protein localises to the nucleus. This chain is Transcription factor bHLH80 (BHLH80), found in Arabidopsis thaliana (Mouse-ear cress).